The chain runs to 636 residues: 1-deoxy-D-xylulose-5-phosphate synthase (636 aa).

Thiamine diphosphate contacts are provided by residues H72 and 113 to 115 (GHA). D144 contributes to the Mg(2+) binding site. Thiamine diphosphate contacts are provided by residues 145–146 (GS), N174, Y287, and E370. A Mg(2+)-binding site is contributed by N174.

This sequence belongs to the transketolase family. DXPS subfamily. In terms of assembly, homodimer. It depends on Mg(2+) as a cofactor. Requires thiamine diphosphate as cofactor.

It catalyses the reaction D-glyceraldehyde 3-phosphate + pyruvate + H(+) = 1-deoxy-D-xylulose 5-phosphate + CO2. It functions in the pathway metabolic intermediate biosynthesis; 1-deoxy-D-xylulose 5-phosphate biosynthesis; 1-deoxy-D-xylulose 5-phosphate from D-glyceraldehyde 3-phosphate and pyruvate: step 1/1. In terms of biological role, catalyzes the acyloin condensation reaction between C atoms 2 and 3 of pyruvate and glyceraldehyde 3-phosphate to yield 1-deoxy-D-xylulose-5-phosphate (DXP). This chain is 1-deoxy-D-xylulose-5-phosphate synthase, found in Synechococcus sp. (strain ATCC 27144 / PCC 6301 / SAUG 1402/1) (Anacystis nidulans).